The chain runs to 302 residues: Putative F-box protein At1g32420 (302 aa).

The span at 1–10 (MKRGNEENNH) shows a compositional bias: basic and acidic residues. Positions 1–27 (MKRGNEENNHKTSSSSSTQRLSRRKIS) are disordered. The 48-residue stretch at 31-78 (KSGNVNIPLDLTVEILKKLPAKSLLRFQCVSKQWLSIISSRRDFIDSI) folds into the F-box domain.

This Arabidopsis thaliana (Mouse-ear cress) protein is Putative F-box protein At1g32420.